The primary structure comprises 658 residues: Heat shock protein homolog SSE1 (658 aa).

Basic and acidic residues predominate over residues 614 to 627 (KRKEEERKSKKENA). Positions 614 to 658 (KRKEEERKSKKENAQEGTSSKPESKEESEAKEDNDEESDVASIDE) are disordered. Acidic residues predominate over residues 642-658 (EAKEDNDEESDVASIDE).

This sequence belongs to the heat shock protein 70 family.

It is found in the cytoplasm. Required for normal growth at various temperatures. This Encephalitozoon cuniculi (strain GB-M1) (Microsporidian parasite) protein is Heat shock protein homolog SSE1 (SSE1).